The chain runs to 460 residues: Equilibrative nucleoside transporter 1 (460 aa).

The Cytoplasmic portion of the chain corresponds to 1–12; that stretch reads MTTSHQPQDRYK. The helical transmembrane segment at 13–29 threads the bilayer; that stretch reads AVWLIFFVLGLGTLLPW. The Extracellular portion of the chain corresponds to 30–82; the sequence is NFFMTATKYFTNRLDVSQNVSSDTDQSCESTKALADPTVALPARSSLSAIFNN. The N-linked (GlcNAc...) asparagine glycan is linked to N48. Residues 83 to 107 form a helical membrane-spanning segment; it reads VMTLCAMLPLLVFTCLNSFLHQRIS. At 108–111 the chain is on the cytoplasmic side; that stretch reads QSVR. A helical membrane pass occupies residues 112–130; the sequence is ILGSLLAILLVFLVTAALV. Topologically, residues 131-138 are extracellular; the sequence is KVEMDALI. The chain crosses the membrane as a helical span at residues 139 to 157; sequence FFVITMIKIVLINSFGAIL. Residues 158-174 are Cytoplasmic-facing; sequence QASLFGLAGVLPANYTA. The chain crosses the membrane as a helical span at residues 175–199; that stretch reads PIMSGQGLAGFFTSVAMICAIASGS. Topologically, residues 200–206 are extracellular; that stretch reads ELSESAF. A helical transmembrane segment spans residues 207–227; that stretch reads GYFITACAVVILAILCYLALP. Over 228–291 the chain is Cytoplasmic; it reads RTEFYRHYLQ…IKAILKSICV (64 aa). S254 is modified (phosphoserine). The span at 255-266 shows a compositional bias: basic and acidic residues; that stretch reads KGEEPKGRREES. Positions 255-277 are disordered; the sequence is KGEEPKGRREESGVPGPNSPPTN. At S273 the chain carries Phosphoserine. Residues 292–311 traverse the membrane as a helical segment; it reads PALSVCFIFTVTIGLFPAVT. The Extracellular portion of the chain corresponds to 312-323; that stretch reads AEVESSIAGTSP. A helical transmembrane segment spans residues 324-342; sequence WKSYFIPVACFLNFNVFDW. The Cytoplasmic portion of the chain corresponds to 343-359; that stretch reads LGRSLTAVCMWPGQDSR. A helical transmembrane segment spans residues 360 to 378; the sequence is WLPVLVASRIVFIPLLMLC. The Extracellular segment spans residues 379–397; it reads NVKARHCGAQRHHFVFKHD. Residues 398–417 form a helical membrane-spanning segment; the sequence is AWFIAFMAAFAFSNGYLASL. Topologically, residues 418–435 are cytoplasmic; sequence CMCFGPKKVKPAEAETAG. A helical membrane pass occupies residues 436–456; the sequence is NIMSFFLCLGLALGAVLSFLL. Topologically, residues 457-460 are extracellular; the sequence is RALV.

The protein belongs to the SLC29A/ENT transporter (TC 2.A.57) family. As to quaternary structure, identified in a complex with STOM. Glycosylated. Highly expressed in heart, spleen, lung, liver and testis. Lower level of expression in brain and kidney. Expressed in adipose tissues, brown adipocytes expressing significantly higher amounts than white adipocytes. Expressed in seminiferous tubules.

It localises to the basolateral cell membrane. The protein localises to the apical cell membrane. Its subcellular location is the cell membrane. It carries out the reaction adenosine(in) = adenosine(out). It catalyses the reaction guanosine(in) = guanosine(out). The enzyme catalyses inosine(in) = inosine(out). The catalysed reaction is uridine(out) = uridine(in). It carries out the reaction thymidine(in) = thymidine(out). It catalyses the reaction cytidine(in) = cytidine(out). The enzyme catalyses adenine(out) = adenine(in). The catalysed reaction is guanine(out) = guanine(in). It carries out the reaction thymine(out) = thymine(in). It catalyses the reaction uracil(in) = uracil(out). The enzyme catalyses hypoxanthine(out) = hypoxanthine(in). Its activity is regulated as follows. Transporter activity is sensitive to low concentrations of the inhibitor nitrobenzylmercaptopurine riboside (NBMPR). In terms of biological role, uniporter involved in the facilitative transport of nucleosides and nucleobases, and contributes to maintaining their cellular homeostasis. Functions as a Na(+)-independent transporter. Involved in the transport of nucleosides such as adenosine, guanosine, inosine, uridine, thymidine and cytidine. Also transports purine (hypoxanthine, adenine, guanine) and pyrimidine nucleobases (thymine, uracil). Mediates basolateral nucleoside uptake into Sertoli cells, thereby regulating the transport of nucleosides in testis across the blood-testis-barrier. Regulates inosine levels in brown adipocytes tissues (BAT) and extracellular inosine levels, which controls BAT-dependent energy expenditure. This Mus musculus (Mouse) protein is Equilibrative nucleoside transporter 1.